The primary structure comprises 185 residues: Adenine phosphoribosyltransferase (185 aa).

This sequence belongs to the purine/pyrimidine phosphoribosyltransferase family. Homodimer.

The protein localises to the cytoplasm. It carries out the reaction AMP + diphosphate = 5-phospho-alpha-D-ribose 1-diphosphate + adenine. Its pathway is purine metabolism; AMP biosynthesis via salvage pathway; AMP from adenine: step 1/1. Its function is as follows. Catalyzes a salvage reaction resulting in the formation of AMP, that is energically less costly than de novo synthesis. This is Adenine phosphoribosyltransferase from Shewanella denitrificans (strain OS217 / ATCC BAA-1090 / DSM 15013).